The primary structure comprises 439 residues: Damage-control phosphatase ARMT1 (439 aa).

A2 carries the post-translational modification N-acetylalanine. Position 4 is a phosphoserine (S4). An N6-acetyllysine modification is found at K40. 2 residues coordinate Mn(2+): D251 and N252. Substrate is bound at residue 251 to 252 (DN). S-adenosyl-L-methionine contacts are provided by E256 and D289. Residue D289 coordinates Mn(2+). Substrate-binding positions include 365 to 369 (DLNYR) and K402. Residues 399 to 402 (RTLK) carry the Subfamily III RTxK motif motif.

Belongs to the damage-control phosphatase family. Sugar phosphate phosphatase III subfamily. Mn(2+) serves as cofactor. Ni(2+) is required as a cofactor. Automethylated.

It carries out the reaction beta-D-fructose 1-phosphate + H2O = D-fructose + phosphate. The enzyme catalyses beta-D-fructose 6-phosphate = dihydroxyacetone + D-glyceraldehyde 3-phosphate. The catalysed reaction is L-glutamyl-[protein] + S-adenosyl-L-methionine = [protein]-L-glutamate 5-O-methyl ester + S-adenosyl-L-homocysteine. Metal-dependent phosphatase that shows phosphatase activity against several substrates, including fructose-1-phosphate and fructose-6-phosphate. Its preference for fructose-1-phosphate, a strong glycating agent that causes DNA damage rather than a canonical yeast metabolite, suggests a damage-control function in hexose phosphate metabolism. Has also been shown to have O-methyltransferase activity that methylates glutamate residues of target proteins to form gamma-glutamyl methyl ester residues. Possibly methylates PCNA, suggesting it is involved in the DNA damage response. This chain is Damage-control phosphatase ARMT1, found in Mus musculus (Mouse).